The primary structure comprises 296 residues: MSPLANRRFLKMHGAGNAIVVLDLRGTAVRVTPAEARAIAADVHSRFDQLMVVHDPVTPGTDAFMRIYNTDGSESGACGNGTRCVGYALLDDPAMARPAENGALTLETKAGLVAVKRITERSFTVDMGQPRLRWDEIPLTEPFLDTRRIELQVGPIDDPILHSPAAVSMGNPHAIFFVERDPDSYDLGRIGPLLEAHPIFPERANISIAEVTSRDTIKLRVWERGAGLTLACGTAACATVVAASRLRMIGRAARVALPGGELSIEWRADDHVLMTGPVYLEGEGTFSPDLFAGIDG.

3 residues coordinate substrate: Asn-17, Gln-49, and Asn-69. Cys-78 (proton donor) is an active-site residue. Substrate-binding positions include 79–80 (GN), Asn-171, Asn-205, and 223–224 (ER). Cys-232 serves as the catalytic Proton acceptor. Residue 233 to 234 (GT) participates in substrate binding.

It belongs to the diaminopimelate epimerase family. Homodimer.

It localises to the cytoplasm. The enzyme catalyses (2S,6S)-2,6-diaminopimelate = meso-2,6-diaminopimelate. It functions in the pathway amino-acid biosynthesis; L-lysine biosynthesis via DAP pathway; DL-2,6-diaminopimelate from LL-2,6-diaminopimelate: step 1/1. Catalyzes the stereoinversion of LL-2,6-diaminopimelate (L,L-DAP) to meso-diaminopimelate (meso-DAP), a precursor of L-lysine and an essential component of the bacterial peptidoglycan. This Methylorubrum extorquens (strain CM4 / NCIMB 13688) (Methylobacterium extorquens) protein is Diaminopimelate epimerase.